We begin with the raw amino-acid sequence, 260 residues long: Triosephosphate isomerase (260 aa).

Asn-11 to Lys-13 lines the substrate pocket. Residue His-103 is the Electrophile of the active site. Residue Glu-175 is the Proton acceptor of the active site. Residues Gly-181, Ser-220, and Gly-241–Gly-242 each bind substrate.

The protein belongs to the triosephosphate isomerase family. As to quaternary structure, homodimer.

The protein resides in the cytoplasm. The catalysed reaction is D-glyceraldehyde 3-phosphate = dihydroxyacetone phosphate. It participates in carbohydrate biosynthesis; gluconeogenesis. It functions in the pathway carbohydrate degradation; glycolysis; D-glyceraldehyde 3-phosphate from glycerone phosphate: step 1/1. Its function is as follows. Involved in the gluconeogenesis. Catalyzes stereospecifically the conversion of dihydroxyacetone phosphate (DHAP) to D-glyceraldehyde-3-phosphate (G3P). The protein is Triosephosphate isomerase of Shewanella loihica (strain ATCC BAA-1088 / PV-4).